A 54-amino-acid chain; its full sequence is MARNEIRPLVKLRSTAGTGYTYITRKNRRNDPDRITLRKYDPVVRRHVDFREER.

It belongs to the bacterial ribosomal protein bL33 family.

The sequence is that of Large ribosomal subunit protein bL33B from Mycolicibacterium vanbaalenii (strain DSM 7251 / JCM 13017 / BCRC 16820 / KCTC 9966 / NRRL B-24157 / PYR-1) (Mycobacterium vanbaalenii).